We begin with the raw amino-acid sequence, 170 residues long: MFIVSLLLLFSVLNVYSNSLDYFKSNFNYLKLSDAKSLPLQDKSTSSGNFVSHKKNNNMSVADNDDSFLYKNIQENKALNLENDLESKSAKDFFRFSAISIGSFPIVLFLSLFFFDVSYYFYSGMNANYVPYPFSNGPSFSKDEIYKKFIVSASIGAIVALTIALLDYFL.

A helical transmembrane segment spans residues 96 to 116 (FSAISIGSFPIVLFLSLFFFD).

It is found in the membrane. This is an uncharacterized protein from Borreliella burgdorferi (strain ATCC 35210 / DSM 4680 / CIP 102532 / B31) (Borrelia burgdorferi).